A 393-amino-acid polypeptide reads, in one-letter code: Putative 8-amino-7-oxononanoate synthase (393 aa).

R23 contacts substrate. 110–111 (GY) provides a ligand contact to pyridoxal 5'-phosphate. H135 lines the substrate pocket. Residues S183, 208-211 (DEAH), and 239-242 (TLSK) contribute to the pyridoxal 5'-phosphate site. An N6-(pyridoxal phosphate)lysine modification is found at K242. Substrate is bound at residue T362.

The protein belongs to the class-II pyridoxal-phosphate-dependent aminotransferase family. BioF subfamily. Homodimer. The cofactor is pyridoxal 5'-phosphate.

The catalysed reaction is 6-carboxyhexanoyl-[ACP] + L-alanine + H(+) = (8S)-8-amino-7-oxononanoate + holo-[ACP] + CO2. The protein operates within cofactor biosynthesis; biotin biosynthesis. Its function is as follows. Catalyzes the decarboxylative condensation of pimeloyl-[acyl-carrier protein] and L-alanine to produce 8-amino-7-oxononanoate (AON), [acyl-carrier protein], and carbon dioxide. The protein is Putative 8-amino-7-oxononanoate synthase (bioF) of Trichodesmium erythraeum (strain IMS101).